The following is a 110-amino-acid chain: Guanine nucleotide-binding protein subunit gamma (110 aa).

The S-palmitoyl cysteine moiety is linked to residue Cys106. Cys107 carries the cysteine methyl ester modification. The S-farnesyl cysteine moiety is linked to residue Cys107. A propeptide spans 108–110 (removed in mature form); it reads TLM.

Belongs to the G protein gamma family. In terms of assembly, g proteins are composed of 3 units, alpha, beta and gamma. The beta-gamma subunit complex (STE4-STE18 complex) interacts with PLP1 and PLP2.

Its subcellular location is the membrane. In terms of biological role, implicated in the pheromone A- and alpha-factor response pathway. The beta and gamma chains of the putative yeast mating response pathway G protein play a positive role in initiation of the mating response. The sequence is that of Guanine nucleotide-binding protein subunit gamma (STE18) from Saccharomyces cerevisiae (strain ATCC 204508 / S288c) (Baker's yeast).